Consider the following 297-residue polypeptide: Transmembrane protein 169 (297 aa).

The disordered stretch occupies residues 1–88 (MEESAPVESQ…EGEDFLDYPG (88 aa)). The Extracellular portion of the chain corresponds to 1–159 (MEESAPVESQ…CQVGADQGPH (159 aa)). Residues 22-31 (RRAVAAVLAL) are compositionally biased toward low complexity. Composition is skewed to acidic residues over residues 61 to 70 (KTDEEPEESE) and 78 to 88 (EEGEDFLDYPG). A helical transmembrane segment spans residues 160-180 (VVLWTLVCLPVVFVLSFVVSF). The Cytoplasmic segment spans residues 181–210 (YYGTITWYNIFLVYNEERTFWHKISCCPCL). The helical transmembrane segment at 211-231 (ILFYPVLIMTMASSLGLYAAV) threads the bilayer. The Extracellular segment spans residues 232-297 (AQLSWSWAAW…PIQEVETSTV (66 aa)).

The protein resides in the membrane. In Mus musculus (Mouse), this protein is Transmembrane protein 169 (Tmem169).